The primary structure comprises 234 residues: Phosphoribosylaminoimidazole-succinocarboxamide synthase (234 aa).

It belongs to the SAICAR synthetase family.

The catalysed reaction is 5-amino-1-(5-phospho-D-ribosyl)imidazole-4-carboxylate + L-aspartate + ATP = (2S)-2-[5-amino-1-(5-phospho-beta-D-ribosyl)imidazole-4-carboxamido]succinate + ADP + phosphate + 2 H(+). Its pathway is purine metabolism; IMP biosynthesis via de novo pathway; 5-amino-1-(5-phospho-D-ribosyl)imidazole-4-carboxamide from 5-amino-1-(5-phospho-D-ribosyl)imidazole-4-carboxylate: step 1/2. This Sulfurisphaera tokodaii (strain DSM 16993 / JCM 10545 / NBRC 100140 / 7) (Sulfolobus tokodaii) protein is Phosphoribosylaminoimidazole-succinocarboxamide synthase.